The following is a 429-amino-acid chain: GTPase Obg (429 aa).

One can recognise an Obg domain in the interval 1–158 (MFVDQVKIYV…RNVQLELKVL (158 aa)). The segment at 124 to 145 (RGNKRFATPANPAPELSENGEP) is disordered. One can recognise an OBG-type G domain in the interval 159 to 329 (ADVGLVGFPS…LLLAIADKLE (171 aa)). Residues 165 to 172 (GFPSVGKS), 190 to 194 (FTTIV), 212 to 215 (DLPG), 282 to 285 (NKMD), and 310 to 312 (SAV) each bind GTP. The Mg(2+) site is built by Ser-172 and Thr-192. The region spanning 351 to 429 (KYVAEEPDFE…LLDYEFEFMD (79 aa)) is the OCT domain.

The protein belongs to the TRAFAC class OBG-HflX-like GTPase superfamily. OBG GTPase family. In terms of assembly, monomer. Mg(2+) is required as a cofactor.

The protein localises to the cytoplasm. Functionally, an essential GTPase which binds GTP, GDP and possibly (p)ppGpp with moderate affinity, with high nucleotide exchange rates and a fairly low GTP hydrolysis rate. Plays a role in control of the cell cycle, stress response, ribosome biogenesis and in those bacteria that undergo differentiation, in morphogenesis control. The polypeptide is GTPase Obg (Listeria monocytogenes serotype 4b (strain F2365)).